The primary structure comprises 284 residues: MRKRIWVGLPLALVFGGIFAFHTVFHIPEQPEMTTISDGSFNQQLHCYESSTRASIDQEGSLNLLVWNIYKQNRANWQSVLTQMSAGAQLILLQEASLEDGLKRWIASGGWSGEQVNAFKAFDKAAGVLTLGWRKPRLACGYTQLEPWIRLPKSGLYSEYLLSDGQMLIVVNLHAVNFTWGVQEYQQQVNDLIAALKEHPGPAIVAGDFNTWSEKRLQAVTERLENAGLIEVVFSPDQRTRFITGLPLDHVFYKGLEVQKAEAPQTDASDHNPLLVSFTLPTDK.

This sequence belongs to the UPF0294 family.

It is found in the cytoplasm. The sequence is that of UPF0294 protein VV1_1880 from Vibrio vulnificus (strain CMCP6).